Consider the following 76-residue polypeptide: Heat shock factor-binding protein 1 (76 aa).

Belongs to the HSBP1 family. As to quaternary structure, homohexamer. Associates with heptad repeats of HSF1 trimers and probably also HSF1 monomers, and with HSP70. Association with HSF1 trimers and HSP70 coincides with attenuation of heat shock response and the conversion of HSF1 trimer to monomer.

The protein localises to the nucleus. Functionally, negative regulator of the heat shock response. Negatively affects HSF1 DNA-binding activity. May have a role in the suppression of the activation of the stress response during the aging process. This chain is Heat shock factor-binding protein 1 (Hsbp1), found in Mus musculus (Mouse).